A 184-amino-acid chain; its full sequence is Ribosome-recycling factor (184 aa).

This sequence belongs to the RRF family.

Its subcellular location is the cytoplasm. Responsible for the release of ribosomes from messenger RNA at the termination of protein biosynthesis. May increase the efficiency of translation by recycling ribosomes from one round of translation to another. The protein is Ribosome-recycling factor of Borrelia garinii subsp. bavariensis (strain ATCC BAA-2496 / DSM 23469 / PBi) (Borreliella bavariensis).